The primary structure comprises 725 residues: Aminopeptidase RNPEPL1 (725 aa).

326–330 contacts substrate; sequence VAMEN. H353 serves as a coordination point for Zn(2+). E354 serves as the catalytic Proton acceptor. 2 residues coordinate Zn(2+): H357 and E376. Positions 676-699 are disordered; sequence GLGSSTEPASEPSTELGKAEADTD. Residues 679-690 show a composition bias toward low complexity; that stretch reads SSTEPASEPSTE.

Belongs to the peptidase M1 family. It depends on Zn(2+) as a cofactor. As to expression, ubiquitously expressed. Expressed at relatively higher levels in heart and skeletal muscle.

The enzyme catalyses Release of N-terminal amino acids, preferentially methionine, from peptides and arylamides.. Inhibited by calcium but not affected by chloride ions. Inhibited by amastatin and to a lower extent by bestatin. Weakly inhibited by puromycin. Functionally, broad specificity aminopeptidase which preferentially hydrolyzes an N-terminal methionine, citrulline or glutamine. In Homo sapiens (Human), this protein is Aminopeptidase RNPEPL1.